Consider the following 258-residue polypeptide: Trypsin (258 aa).

Positions 1-16 (MIRFTLALAVIGVTFA) are cleaved as a signal peptide. Residues 17–29 (ASTPQIETNPNLE) constitute a propeptide, activation peptide. A Peptidase S1 domain is found at 30–257 (IIGGHDANII…FRDWINEETE (228 aa)). C55 and C71 are oxidised to a cystine. The active-site Charge relay system is the H70. Residue N110 is glycosylated (N-linked (GlcNAc...) asparagine). D117 (charge relay system) is an active-site residue. N-linked (GlcNAc...) asparagine glycans are attached at residues N130 and N188. Disulfide bonds link C182-C197 and C209-C233. The Charge relay system role is filled by S213.

Belongs to the peptidase S1 family. Expressed in larval carcasses and gut, and adult gut.

Its subcellular location is the secreted. It catalyses the reaction Preferential cleavage: Arg-|-Xaa, Lys-|-Xaa.. The protein is Trypsin of Phaedon cochleariae (Mustard beetle).